The primary structure comprises 350 residues: tRNA uridine(34) hydroxylase (350 aa).

The 95-residue stretch at 146 to 240 folds into the Rhodanese domain; the sequence is DDPDALFIDM…YARKAREQGL (95 aa). Catalysis depends on Cys-200, which acts as the Cysteine persulfide intermediate.

Belongs to the TrhO family.

It carries out the reaction uridine(34) in tRNA + AH2 + O2 = 5-hydroxyuridine(34) in tRNA + A + H2O. In terms of biological role, catalyzes oxygen-dependent 5-hydroxyuridine (ho5U) modification at position 34 in tRNAs, the first step in 5-carboxymethoxyuridine (cmo5U) biosynthesis. May be part of an alternate pathway, which is able to bypass cmo5U biogenesis in a subset of tRNAs under aerobic conditions. This chain is tRNA uridine(34) hydroxylase, found in Escherichia coli (strain SMS-3-5 / SECEC).